A 71-amino-acid polypeptide reads, in one-letter code: Delta-actitoxin-Avd2b 2 (71 aa).

Positions 1–20 are cleaved as a signal peptide; the sequence is MNRLLVFLMLGAAFMLVVSA. Positions 21-41 are excised as a propeptide; it reads NDAYGDEPAFKDLNQGDESLG. 3 cysteine pairs are disulfide-bonded: Cys46–Cys61, Cys47–Cys55, and Cys49–Cys66.

The protein belongs to the sea anemone short toxin (type III) family.

Its subcellular location is the secreted. The protein localises to the nematocyst. Functionally, voltage-gated sodium channel (Nav) inhibitor. 1 uM completely inhibits insect voltage-gated sodium channel inactivation (DmNav1 from D.melanogaster). This is Delta-actitoxin-Avd2b 2 from Anemonia viridis (Snakelocks anemone).